Consider the following 314-residue polypeptide: Ribosomal large subunit pseudouridine synthase C (314 aa).

One can recognise an S4 RNA-binding domain in the interval 20 to 84 (QRIDNFMRSK…CDIKNTFFPL (65 aa)). D143 is a catalytic residue.

The protein belongs to the pseudouridine synthase RluA family.

The enzyme catalyses uridine(955/2504/2580) in 23S rRNA = pseudouridine(955/2504/2580) in 23S rRNA. Responsible for synthesis of pseudouridine from uracil at positions 955, 2504 and 2580 in 23S ribosomal RNA. This chain is Ribosomal large subunit pseudouridine synthase C (rluC), found in Buchnera aphidicola subsp. Acyrthosiphon pisum (strain APS) (Acyrthosiphon pisum symbiotic bacterium).